The chain runs to 235 residues: 7-cyano-7-deazaguanine synthase (235 aa).

16-26 is a binding site for ATP; the sequence is FSGGQDSTTCL. Zn(2+)-binding residues include C193, C201, C204, and C207.

It belongs to the QueC family. Zn(2+) serves as cofactor.

It catalyses the reaction 7-carboxy-7-deazaguanine + NH4(+) + ATP = 7-cyano-7-deazaguanine + ADP + phosphate + H2O + H(+). It functions in the pathway purine metabolism; 7-cyano-7-deazaguanine biosynthesis. Its function is as follows. Catalyzes the ATP-dependent conversion of 7-carboxy-7-deazaguanine (CDG) to 7-cyano-7-deazaguanine (preQ(0)). In Actinobacillus succinogenes (strain ATCC 55618 / DSM 22257 / CCUG 43843 / 130Z), this protein is 7-cyano-7-deazaguanine synthase.